The following is a 251-amino-acid chain: Pyrroloquinoline-quinone synthase (251 aa).

It belongs to the PqqC family.

The catalysed reaction is 6-(2-amino-2-carboxyethyl)-7,8-dioxo-1,2,3,4,7,8-hexahydroquinoline-2,4-dicarboxylate + 3 O2 = pyrroloquinoline quinone + 2 H2O2 + 2 H2O + H(+). It functions in the pathway cofactor biosynthesis; pyrroloquinoline quinone biosynthesis. Functionally, ring cyclization and eight-electron oxidation of 3a-(2-amino-2-carboxyethyl)-4,5-dioxo-4,5,6,7,8,9-hexahydroquinoline-7,9-dicarboxylic-acid to PQQ. The protein is Pyrroloquinoline-quinone synthase of Pseudomonas putida (strain ATCC 47054 / DSM 6125 / CFBP 8728 / NCIMB 11950 / KT2440).